Here is a 653-residue protein sequence, read N- to C-terminus: tRNA 5-methylaminomethyl-2-thiouridine biosynthesis bifunctional protein MnmC (653 aa).

Positions 1-236 (MPDRLVPATL…KFAMLVGEYA (236 aa)) are tRNA (mnm(5)s(2)U34)-methyltransferase. Positions 260-653 (IGAGLAGCAL…IRALRGRKLG (394 aa)) are FAD-dependent cmnm(5)s(2)U34 oxidoreductase.

It in the N-terminal section; belongs to the methyltransferase superfamily. tRNA (mnm(5)s(2)U34)-methyltransferase family. In the C-terminal section; belongs to the DAO family. FAD is required as a cofactor.

The protein resides in the cytoplasm. The enzyme catalyses 5-aminomethyl-2-thiouridine(34) in tRNA + S-adenosyl-L-methionine = 5-methylaminomethyl-2-thiouridine(34) in tRNA + S-adenosyl-L-homocysteine + H(+). Functionally, catalyzes the last two steps in the biosynthesis of 5-methylaminomethyl-2-thiouridine (mnm(5)s(2)U) at the wobble position (U34) in tRNA. Catalyzes the FAD-dependent demodification of cmnm(5)s(2)U34 to nm(5)s(2)U34, followed by the transfer of a methyl group from S-adenosyl-L-methionine to nm(5)s(2)U34, to form mnm(5)s(2)U34. The chain is tRNA 5-methylaminomethyl-2-thiouridine biosynthesis bifunctional protein MnmC from Burkholderia vietnamiensis (strain G4 / LMG 22486) (Burkholderia cepacia (strain R1808)).